Reading from the N-terminus, the 95-residue chain is ESAT-6-like protein EsxA (95 aa).

It belongs to the WXG100 family. ESAT-6 subfamily. In terms of assembly, forms a tight 1:1 complex with EsxB.

The polypeptide is ESAT-6-like protein EsxA (Corynebacterium diphtheriae (strain ATCC 700971 / NCTC 13129 / Biotype gravis)).